The following is a 101-amino-acid chain: YcgL domain-containing protein ABBFA_001807 (101 aa).

One can recognise a YcgL domain in the interval 1–92; that stretch reads MHCDIYRSSK…PPEGLINPNA (92 aa).

The chain is YcgL domain-containing protein ABBFA_001807 from Acinetobacter baumannii (strain AB307-0294).